Reading from the N-terminus, the 494-residue chain is Ketol-acid reductoisomerase (NADP(+)) (494 aa).

Positions 14–208 (LDQLGRCRFM…GGHRAGCLES (195 aa)) constitute a KARI N-terminal Rossmann domain. NADP(+) contacts are provided by residues 45–48 (CGAQ), Arg-68, Arg-76, Ser-78, and 108–110 (DKQ). His-132 is an active-site residue. Position 158 (Gly-158) interacts with NADP(+). 2 KARI C-terminal knotted domains span residues 209 to 344 (SFVA…NYPA) and 345 to 487 (SDVE…MSDM). Mg(2+) contacts are provided by Asp-217, Glu-221, Glu-389, and Glu-393. Position 414 (Ser-414) interacts with substrate.

This sequence belongs to the ketol-acid reductoisomerase family. It depends on Mg(2+) as a cofactor.

The enzyme catalyses (2R)-2,3-dihydroxy-3-methylbutanoate + NADP(+) = (2S)-2-acetolactate + NADPH + H(+). The catalysed reaction is (2R,3R)-2,3-dihydroxy-3-methylpentanoate + NADP(+) = (S)-2-ethyl-2-hydroxy-3-oxobutanoate + NADPH + H(+). Its pathway is amino-acid biosynthesis; L-isoleucine biosynthesis; L-isoleucine from 2-oxobutanoate: step 2/4. It participates in amino-acid biosynthesis; L-valine biosynthesis; L-valine from pyruvate: step 2/4. Its function is as follows. Involved in the biosynthesis of branched-chain amino acids (BCAA). Catalyzes an alkyl-migration followed by a ketol-acid reduction of (S)-2-acetolactate (S2AL) to yield (R)-2,3-dihydroxy-isovalerate. In the isomerase reaction, S2AL is rearranged via a Mg-dependent methyl migration to produce 3-hydroxy-3-methyl-2-ketobutyrate (HMKB). In the reductase reaction, this 2-ketoacid undergoes a metal-dependent reduction by NADPH to yield (R)-2,3-dihydroxy-isovalerate. The chain is Ketol-acid reductoisomerase (NADP(+)) from Vibrio atlanticus (strain LGP32) (Vibrio splendidus (strain Mel32)).